The primary structure comprises 355 residues: Peptide chain release factor 1 (355 aa).

Glutamine 233 is subject to N5-methylglutamine.

This sequence belongs to the prokaryotic/mitochondrial release factor family. In terms of processing, methylated by PrmC. Methylation increases the termination efficiency of RF1.

The protein resides in the cytoplasm. In terms of biological role, peptide chain release factor 1 directs the termination of translation in response to the peptide chain termination codons UAG and UAA. The protein is Peptide chain release factor 1 of Desulforudis audaxviator (strain MP104C).